A 290-amino-acid polypeptide reads, in one-letter code: Ribosomal RNA small subunit methyltransferase A (290 aa).

S-adenosyl-L-methionine is bound by residues H37, V39, G64, E85, D115, and N132.

The protein belongs to the class I-like SAM-binding methyltransferase superfamily. rRNA adenine N(6)-methyltransferase family. RsmA subfamily.

Its subcellular location is the cytoplasm. The enzyme catalyses adenosine(1518)/adenosine(1519) in 16S rRNA + 4 S-adenosyl-L-methionine = N(6)-dimethyladenosine(1518)/N(6)-dimethyladenosine(1519) in 16S rRNA + 4 S-adenosyl-L-homocysteine + 4 H(+). Its function is as follows. Specifically dimethylates two adjacent adenosines (A1518 and A1519) in the loop of a conserved hairpin near the 3'-end of 16S rRNA in the 30S particle. May play a critical role in biogenesis of 30S subunits. The sequence is that of Ribosomal RNA small subunit methyltransferase A from Acidothermus cellulolyticus (strain ATCC 43068 / DSM 8971 / 11B).